Consider the following 238-residue polypeptide: Uracil-DNA glycosylase (238 aa).

Residue Asp-81 is the Proton acceptor of the active site.

It belongs to the uracil-DNA glycosylase (UDG) superfamily. UNG family.

The protein resides in the cytoplasm. It carries out the reaction Hydrolyzes single-stranded DNA or mismatched double-stranded DNA and polynucleotides, releasing free uracil.. Its function is as follows. Excises uracil residues from the DNA which can arise as a result of misincorporation of dUMP residues by DNA polymerase or due to deamination of cytosine. The protein is Uracil-DNA glycosylase of Corynebacterium efficiens (strain DSM 44549 / YS-314 / AJ 12310 / JCM 11189 / NBRC 100395).